A 913-amino-acid polypeptide reads, in one-letter code: MSRFFANGSDSESESSEEEVQASNFNKAANFQFSDDEEEVKRVVRSTKEKRYENLTSIIKTIRNHKKIKDIPNTLSSFEDLTRAYTKALPVISKEENGITPRFYIRCLAELEDFINEVWEDREGRKNLSKNNAKSLGTLRQKVRKYIKDFEEDLARFREAPDQESDVEEGEGEPHDSDGDRAGADSDDGVGAGTGKLAELPKAAKSAPTKAVADEDDSDDSIDWDSDTESETESSEDENLYQNMRERFLKRTTEKEDKDDDKRKDKRKEQKHKVRKRAEDDEDGEWETVVKGNVVEKPKMFEKDAEIDIPLVLAKLIEIMSARGKKRTDRRLQIDLLFELRDIAEQHALGTPISVKIHFNIISAIFDYNQKISEPMKLEHWALLLEVMQSMMKLLLANPDIIMNESVAEEHEEYVTAPFYIRGCPLAAVERLDDEFTKLLKECDPHSNDYVSRLKDEINVVKTIELVVQYFERCGNNNERCRIYLRKIEHLYYKFDPEVLKRKRGELPAAGTAPSSVEVMDKLCKFIYAKDDTDRIRTRAILAHIYHHAMHDNWFQARDLVLMSHLQDNIDAADPSTRILYNRMMANLGLCAFRQENIKDAHHCLVDLMVTGKPKELLAQGLLPQRQHERSAEQEKIEKQRQMPFHMHINLELLECVYLVSAMLLEIPYIAAHEFDARRRMISKTFYQQLRSSERQSLVGPPESMREHVVAAAKAMRCGNWQACANFIVNKKMNTKVWDLFYESERVREMLVKFIKEESLRTYLFTYSNVYTSISIPSLAQMYELPLPKVHSIISKMIINEELMASLDDPSETVVMHRSEPSRLQALAMQFVDKVTNLVDVNEKVFDMKQGNFFQRGNMGNRDRGYNRNQNNQGGNWGGQRRDNRNQRNRNQRGHHKQQQQQQQQQVQTIEEE.

Residues 1 to 22 (MSRFFANGSDSESESSEEEVQA) form a disordered region. The segment covering 11-20 (SESESSEEEV) has biased composition (acidic residues). Serine 34, serine 165, serine 177, and serine 186 each carry phosphoserine. Residues 157-285 (FREAPDQESD…KRAEDDEDGE (129 aa)) are disordered. Acidic residues predominate over residues 162–171 (DQESDVEEGE). Residues 172 to 184 (GEPHDSDGDRAGA) are compositionally biased toward basic and acidic residues. A compositionally biased stretch (acidic residues) spans 214–239 (DEDDSDDSIDWDSDTESETESSEDEN). Basic and acidic residues predominate over residues 244–263 (MRERFLKRTTEKEDKDDDKR). Positions 264 to 276 (KDKRKEQKHKVRK) are enriched in basic residues. Residues 645–821 (FHMHINLELL…ETVVMHRSEP (177 aa)) enclose the PCI domain. Residues 856 to 913 (RGNMGNRDRGYNRNQNNQGGNWGGQRRDNRNQRNRNQRGHHKQQQQQQQQQVQTIEEE) form a disordered region. Over residues 887–898 (QRNRNQRGHHKQ) the composition is skewed to basic residues.

This sequence belongs to the eIF-3 subunit C family. Component of the eukaryotic translation initiation factor 3 (eIF-3) complex. The eIF-3 complex interacts with pix.

It is found in the cytoplasm. Functionally, component of the eukaryotic translation initiation factor 3 (eIF-3) complex, which is involved in protein synthesis of a specialized repertoire of mRNAs and, together with other initiation factors, stimulates binding of mRNA and methionyl-tRNAi to the 40S ribosome. The eIF-3 complex specifically targets and initiates translation of a subset of mRNAs involved in cell proliferation. This chain is Eukaryotic translation initiation factor 3 subunit C, found in Drosophila mojavensis (Fruit fly).